Consider the following 661-residue polypeptide: UvrABC system protein B (661 aa).

One can recognise a Helicase ATP-binding domain in the interval 24 to 209 (NGLNKGYRFQ…IFPSYQDEGI (186 aa)). 37–44 (GVTGSGKT) lines the ATP pocket. The Beta-hairpin motif lies at 90 to 113 (YYDYYQPEAYVPTKDLYIEKSADI). The 165-residue stretch at 430–594 (DLVNEIVQVK…IIKPLMEDIF (165 aa)) folds into the Helicase C-terminal domain. Positions 622 to 657 (EEYAALLEEEMYKAASELRYEDAARLRDELFKIKEE) constitute a UVR domain.

This sequence belongs to the UvrB family. In terms of assembly, forms a heterotetramer with UvrA during the search for lesions. Interacts with UvrC in an incision complex.

Its subcellular location is the cytoplasm. In terms of biological role, the UvrABC repair system catalyzes the recognition and processing of DNA lesions. A damage recognition complex composed of 2 UvrA and 2 UvrB subunits scans DNA for abnormalities. Upon binding of the UvrA(2)B(2) complex to a putative damaged site, the DNA wraps around one UvrB monomer. DNA wrap is dependent on ATP binding by UvrB and probably causes local melting of the DNA helix, facilitating insertion of UvrB beta-hairpin between the DNA strands. Then UvrB probes one DNA strand for the presence of a lesion. If a lesion is found the UvrA subunits dissociate and the UvrB-DNA preincision complex is formed. This complex is subsequently bound by UvrC and the second UvrB is released. If no lesion is found, the DNA wraps around the other UvrB subunit that will check the other stand for damage. This Fervidobacterium nodosum (strain ATCC 35602 / DSM 5306 / Rt17-B1) protein is UvrABC system protein B.